Reading from the N-terminus, the 463-residue chain is Methionine aminopeptidase 2-2 (463 aa).

Residues 1 to 107 (MGAKTFEGGD…VPLSQLFPDG (107 aa)) form a disordered region. Positions 37-53 (EDGDGEFGTDDDDDGDG) are enriched in acidic residues. Residues 69–83 (PKKRKRSKKKKSNKK) show a composition bias toward basic residues. H215 serves as a coordination point for substrate. Residues D236, D247, and H316 each contribute to the a divalent metal cation site. Substrate is bound at residue H324. E349 and E444 together coordinate a divalent metal cation.

This sequence belongs to the peptidase M24A family. Methionine aminopeptidase eukaryotic type 2 subfamily. It depends on Co(2+) as a cofactor. The cofactor is Zn(2+). Mn(2+) serves as cofactor. Fe(2+) is required as a cofactor.

The protein resides in the cytoplasm. It carries out the reaction Release of N-terminal amino acids, preferentially methionine, from peptides and arylamides.. In terms of biological role, cotranslationally removes the N-terminal methionine from nascent proteins. The N-terminal methionine is often cleaved when the second residue in the primary sequence is small and uncharged (Met-Ala-, Cys, Gly, Pro, Ser, Thr, or Val). The protein is Methionine aminopeptidase 2-2 of Talaromyces marneffei (strain ATCC 18224 / CBS 334.59 / QM 7333) (Penicillium marneffei).